The sequence spans 1036 residues: Isoleucine--tRNA ligase (1036 aa).

A 'HIGH' region motif is present at residues P46–H56. Positions K589 to R593 match the 'KMSKS' region motif. An ATP-binding site is contributed by K592.

This sequence belongs to the class-I aminoacyl-tRNA synthetase family. IleS type 2 subfamily. As to quaternary structure, monomer. Requires Zn(2+) as cofactor.

The protein resides in the cytoplasm. It carries out the reaction tRNA(Ile) + L-isoleucine + ATP = L-isoleucyl-tRNA(Ile) + AMP + diphosphate. Catalyzes the attachment of isoleucine to tRNA(Ile). As IleRS can inadvertently accommodate and process structurally similar amino acids such as valine, to avoid such errors it has two additional distinct tRNA(Ile)-dependent editing activities. One activity is designated as 'pretransfer' editing and involves the hydrolysis of activated Val-AMP. The other activity is designated 'posttransfer' editing and involves deacylation of mischarged Val-tRNA(Ile). This Chlamydia trachomatis serovar L2 (strain ATCC VR-902B / DSM 19102 / 434/Bu) protein is Isoleucine--tRNA ligase.